Reading from the N-terminus, the 410-residue chain is Translation initiation factor 2 subunit gamma (410 aa).

The tr-type G domain maps to 9–202 (QAEVNIGMVG…AIEEFIPTPK (194 aa)). The G1 stretch occupies residues 18-25 (GHVDHGKT). The Mg(2+) site is built by D21, T25, G46, and T48. 21-26 (DHGKTT) provides a ligand contact to GTP. The G2 stretch occupies residues 46 to 50 (GITIK). Positions 61, 64, 73, and 76 each coordinate Zn(2+). The segment at 90-93 (DAPG) is G3. GTP contacts are provided by residues 145-148 (NKIE) and 180-182 (SAL). Positions 145 to 148 (NKIE) are G4. The G5 stretch occupies residues 180 to 182 (SAL).

It belongs to the TRAFAC class translation factor GTPase superfamily. Classic translation factor GTPase family. EIF2G subfamily. As to quaternary structure, heterotrimer composed of an alpha, a beta and a gamma chain. Mg(2+) serves as cofactor.

It catalyses the reaction GTP + H2O = GDP + phosphate + H(+). EIF-2 functions in the early steps of protein synthesis by forming a ternary complex with GTP and initiator tRNA. In Thermococcus kodakarensis (strain ATCC BAA-918 / JCM 12380 / KOD1) (Pyrococcus kodakaraensis (strain KOD1)), this protein is Translation initiation factor 2 subunit gamma.